Here is a 1182-residue protein sequence, read N- to C-terminus: Rho guanine nucleotide exchange factor osg-1 (1182 aa).

Over residues 1–12 (MLNPNDADDSDS) the composition is skewed to acidic residues. The segment at 1-96 (MLNPNDADDS…TNSEPNVDMP (96 aa)) is disordered. The span at 29–41 (ATVSPSTRNSFYN) shows a compositional bias: polar residues. The span at 69-78 (ASRERSESRR) shows a compositional bias: basic and acidic residues. Residues 357 to 544 (VRHLAARELL…HCLAVAINQH (188 aa)) enclose the DH domain. The stretch at 637–669 (EDVQISKDTLSQLEEVERKLESSREDDRVLKKM) forms a coiled coil. Residues 863–884 (INSSGSDTESSSDEGTSTAGQT) form a disordered region. Residues 865 to 879 (SSGSDTESSSDEGTS) show a composition bias toward low complexity. The stretch at 897–922 (VVNSTERVRSRARDRLARLRNSITSI) forms a coiled coil.

Expressed in muscles in the body wall and head, and in the nervous system in neurons including FLP and ASE neurons in the head.

In terms of biological role, probable guanine nucleotide exchange factor which regulates the Rho GTPase rho-1. Functions in ASE sensory neurons where it promotes neuronal degeneration under conditions of oxidative stress. The sequence is that of Rho guanine nucleotide exchange factor osg-1 from Caenorhabditis elegans.